Here is a 292-residue protein sequence, read N- to C-terminus: E3 ubiquitin-protein ligase RNF144A (292 aa).

The interval Pro-16–Leu-236 is TRIAD supradomain. Residues Cys-20, Cys-23, Cys-43, Cys-46, Cys-111, Cys-116, Cys-135, Cys-138, Cys-143, Cys-146, His-151, Cys-156, Cys-185, and Cys-188 each coordinate Zn(2+). Residues Cys-20–Cys-70 form an RING-type 1 zinc finger. The IBR-type zinc-finger motif lies at Gln-91 to Cys-156. The segment at Cys-185–Cys-214 adopts an RING-type 2; atypical zinc-finger fold. The active site involves Cys-198. Positions 203, 206, 211, 214, 226, and 232 each coordinate Zn(2+). Residues Val-250–Leu-270 traverse the membrane as a helical segment.

It belongs to the RBR family. RNF144 subfamily. As to quaternary structure, self-associates. Interacts with UBE2L3. Autoubiquitinated.

The protein resides in the cell membrane. Its subcellular location is the cytoplasmic vesicle membrane. It carries out the reaction [E2 ubiquitin-conjugating enzyme]-S-ubiquitinyl-L-cysteine + [acceptor protein]-L-lysine = [E2 ubiquitin-conjugating enzyme]-L-cysteine + [acceptor protein]-N(6)-ubiquitinyl-L-lysine.. Its pathway is protein modification; protein ubiquitination. E3 ubiquitin-protein ligase which accepts ubiquitin from E2 ubiquitin-conjugating enzymes UBE2L3 and UBE2L6 in the form of a thioester and then directly transfers the ubiquitin to targeted substrates. Mediates the ubiquitination and degradation of the DNA damage kinase PRKDC during DNA damage. Positively regulates DNA virus or exogenous cytosolic DNA-triggered innate immune response by mediating STING1 ubiquitination and increasing its 'Lys-6'-linked ubiquitination and translocation from the endoplasmic reticulum to the Golgi leading to downstream signaling pathways. Plays a positive role in EGF-dependent cell proliferation by prolonging EGF/EGFR signaling during EGF stimulation through EGFR ubiquitination. Increases ERK activity independently of EGFR signaling by promoting polyubiquitination and subsequent degradation of VRK3 in the cytosol. The polypeptide is E3 ubiquitin-protein ligase RNF144A (Rnf144a) (Mus musculus (Mouse)).